Here is a 446-residue protein sequence, read N- to C-terminus: Ribosomal protein uS12 methylthiotransferase RimO (446 aa).

An MTTase N-terminal domain is found at 4–119 (LKVGLISLGC…LVENINNFIS (116 aa)). 6 residues coordinate [4Fe-4S] cluster: Cys-13, Cys-48, Cys-82, Cys-157, Cys-161, and Cys-164. Residues 143-373 (TTKSHTAYLR…MMLQKHIIYS (231 aa)) form the Radical SAM core domain. The TRAM domain occupies 376-442 (KYKIGNKYKV…EYDLVGVVYD (67 aa)).

The protein belongs to the methylthiotransferase family. RimO subfamily. It depends on [4Fe-4S] cluster as a cofactor.

The protein resides in the cytoplasm. It catalyses the reaction L-aspartate(89)-[ribosomal protein uS12]-hydrogen + (sulfur carrier)-SH + AH2 + 2 S-adenosyl-L-methionine = 3-methylsulfanyl-L-aspartate(89)-[ribosomal protein uS12]-hydrogen + (sulfur carrier)-H + 5'-deoxyadenosine + L-methionine + A + S-adenosyl-L-homocysteine + 2 H(+). In terms of biological role, catalyzes the methylthiolation of an aspartic acid residue of ribosomal protein uS12. The polypeptide is Ribosomal protein uS12 methylthiotransferase RimO (Clostridium kluyveri (strain ATCC 8527 / DSM 555 / NBRC 12016 / NCIMB 10680 / K1)).